Consider the following 182-residue polypeptide: Dual-action ribosomal maturation protein DarP (182 aa).

The tract at residues M1–H25 is disordered.

Belongs to the DarP family.

It localises to the cytoplasm. Functionally, member of a network of 50S ribosomal subunit biogenesis factors which assembles along the 30S-50S interface, preventing incorrect 23S rRNA structures from forming. Promotes peptidyl transferase center (PTC) maturation. This chain is Dual-action ribosomal maturation protein DarP, found in Nitrosospira multiformis (strain ATCC 25196 / NCIMB 11849 / C 71).